Consider the following 143-residue polypeptide: UPF0179 protein PTO0851 (143 aa).

This sequence belongs to the UPF0179 family.

This is UPF0179 protein PTO0851 from Picrophilus torridus (strain ATCC 700027 / DSM 9790 / JCM 10055 / NBRC 100828 / KAW 2/3).